Consider the following 89-residue polypeptide: Small ribosomal subunit protein uS14A (89 aa).

This sequence belongs to the universal ribosomal protein uS14 family. In terms of assembly, part of the 30S ribosomal subunit. Contacts proteins S3 and S10.

Functionally, binds 16S rRNA, required for the assembly of 30S particles and may also be responsible for determining the conformation of the 16S rRNA at the A site. This is Small ribosomal subunit protein uS14A from Streptococcus agalactiae serotype Ia (strain ATCC 27591 / A909 / CDC SS700).